A 98-amino-acid chain; its full sequence is Integration host factor subunit beta (98 aa).

Belongs to the bacterial histone-like protein family. Heterodimer of an alpha and a beta chain.

In terms of biological role, this protein is one of the two subunits of integration host factor, a specific DNA-binding protein that functions in genetic recombination as well as in transcriptional and translational control. This is Integration host factor subunit beta from Pseudomonas entomophila (strain L48).